A 433-amino-acid polypeptide reads, in one-letter code: Enolase (433 aa).

(2R)-2-phosphoglycerate is bound at residue Gln167. The Proton donor role is filled by Glu209. Residues Asp246, Glu291, and Asp318 each coordinate Mg(2+). Lys326 carries the post-translational modification N6-acetyllysine. 4 residues coordinate (2R)-2-phosphoglycerate: Lys343, Arg372, Ser373, and Lys394. Lys343 acts as the Proton acceptor in catalysis. Residue Lys343 is modified to N6-(2-hydroxyisobutyryl)lysine.

It belongs to the enolase family. Component of the RNA degradosome, a multiprotein complex involved in RNA processing and mRNA degradation. It depends on Mg(2+) as a cofactor. Acetylated and 2-hydroxyisobutyrylated at Lys-326 and Lys-343, respectively, reducing the enolase activity. Deacetylated and de-2-hydroxyisobutyrylated by NpdA/CobB, increasing the enolase activity.

The protein resides in the cytoplasm. The protein localises to the secreted. Its subcellular location is the cell surface. The enzyme catalyses (2R)-2-phosphoglycerate = phosphoenolpyruvate + H2O. Its pathway is carbohydrate degradation; glycolysis; pyruvate from D-glyceraldehyde 3-phosphate: step 4/5. Its function is as follows. Catalyzes the reversible conversion of 2-phosphoglycerate (2-PG) into phosphoenolpyruvate (PEP). It is essential for the degradation of carbohydrates via glycolysis. In Proteus mirabilis (strain HI4320), this protein is Enolase.